The chain runs to 266 residues: Undecaprenyl-diphosphatase (266 aa).

A run of 7 helical transmembrane segments spans residues 41–61, 82–102, 106–126, 140–160, 180–200, 213–233, and 245–265; these read NLAF…VILW, YVIN…FFKD, AIFG…AALL, ISMK…LPGL, LAQF…LLDG, IPTL…CLAC, and LIYF…VSQL.

It belongs to the UppP family.

The protein localises to the cell inner membrane. It carries out the reaction di-trans,octa-cis-undecaprenyl diphosphate + H2O = di-trans,octa-cis-undecaprenyl phosphate + phosphate + H(+). Its function is as follows. Catalyzes the dephosphorylation of undecaprenyl diphosphate (UPP). Confers resistance to bacitracin. The polypeptide is Undecaprenyl-diphosphatase (Bacteroides fragilis (strain YCH46)).